Here is a 483-residue protein sequence, read N- to C-terminus: MFS-type transporter hepF (483 aa).

The interval 1 to 31 (METPAGKADRPRDHDSEQSQDNVVSWEGEDD) is disordered. The segment covering 7–17 (KADRPRDHDSE) has biased composition (basic and acidic residues). Helical transmembrane passes span 89-109 (TIVV…AAPI), 124-144 (ILYT…MLIV), 147-167 (FFAG…VADL), 179-199 (FVTL…GFLT), 206-226 (WVFW…ILFT), 276-296 (PISL…YVLV), 311-331 (IGIS…GLWI), 357-377 (PMMI…GWSV), 385-405 (MPIV…MPMV), 416-436 (AASA…VLPL), and 448-468 (GWGN…LIAI).

It belongs to the major facilitator superfamily.

It localises to the cell membrane. MFS-type transporter; part of the gene cluster that mediates the biosynthesis of heptelidic acid (HA), a sesquiterpene lactone that acts as an inhibitor of glyceraldehyde-3-phosphatedehydrogenase (GAPDH) and a growth inhibitor of the salt-tolerant lactic acid bacteria in soy sauce brewing. Might be required for efficient secretion of heptelidic acid. The chain is MFS-type transporter hepF (hepF) from Aspergillus oryzae (strain ATCC 42149 / RIB 40) (Yellow koji mold).